The sequence spans 516 residues: Golgi-associated kinase 1B (516 aa).

Residues 1 to 37 (MTCPDKLGQLINWFVCSLCAPRVCKLWSSRRPRTRRN) lie on the Cytoplasmic side of the membrane. The helical; Signal-anchor for type II membrane protein transmembrane segment at 38–55 (LLLGTACAIYLGFLVSQV) threads the bilayer. Residues 56–516 (GKGSFQHGQA…HGARVLPMNE (461 aa)) lie on the Extracellular side of the membrane. N-linked (GlcNAc...) asparagine glycosylation is present at Asn286.

It belongs to the GASK family.

It is found in the golgi apparatus membrane. The sequence is that of Golgi-associated kinase 1B from Rattus norvegicus (Rat).